Here is a 336-residue protein sequence, read N- to C-terminus: Dihydroorotate dehydrogenase (quinone) (336 aa).

FMN-binding positions include 62-66 and T86; that span reads AGLDK. A substrate-binding site is contributed by K66. Residue 111-115 coordinates substrate; sequence NRMGF. FMN is bound by residues N139 and N172. N172 is a binding site for substrate. The active-site Nucleophile is S175. Residue N177 coordinates substrate. Residues K217 and T245 each coordinate FMN. 246-247 lines the substrate pocket; it reads NT. Residues G268, G297, and 318–319 contribute to the FMN site; that span reads YS.

Belongs to the dihydroorotate dehydrogenase family. Type 2 subfamily. Monomer. FMN is required as a cofactor.

Its subcellular location is the cell membrane. The catalysed reaction is (S)-dihydroorotate + a quinone = orotate + a quinol. It functions in the pathway pyrimidine metabolism; UMP biosynthesis via de novo pathway; orotate from (S)-dihydroorotate (quinone route): step 1/1. Catalyzes the conversion of dihydroorotate to orotate with quinone as electron acceptor. The sequence is that of Dihydroorotate dehydrogenase (quinone) from Citrobacter koseri (strain ATCC BAA-895 / CDC 4225-83 / SGSC4696).